A 103-amino-acid chain; its full sequence is Acyl carrier protein homolog (103 aa).

Positions 3–87 (ELTSEIKKEI…ETLEKVVQTT (85 aa)) constitute a Carrier domain. Serine 45 carries the post-translational modification O-(pantetheine 4'-phosphoryl)serine.

In terms of processing, 4'-phosphopantetheine is transferred from CoA to a specific serine of the apo-ACP-like protein.

Its subcellular location is the cytoplasm. In terms of biological role, acyl carrier protein. The protein is Acyl carrier protein homolog of Clostridium acetobutylicum (strain ATCC 824 / DSM 792 / JCM 1419 / IAM 19013 / LMG 5710 / NBRC 13948 / NRRL B-527 / VKM B-1787 / 2291 / W).